A 379-amino-acid chain; its full sequence is Structure-specific endonuclease subunit EME2 (379 aa).

Positions 1–55 are disordered; it reads MARVGPGRAGVSCQGRGRGRGGSGQRRPPTWEISDSDAEDSAGSEAAARARDPAG. Residues 50–266 are nuclease-like domain; forms the post-nick DNA binding interface and is involved in DNA recognition and bending; that stretch reads ARDPAGERRA…YPLKQYRESQ (217 aa). Residues 288-379 form a helix-hairpin-helix (2HhH); forms the pre-nick DNA binding interface and is involved in DNA recognition and bending region; sequence GLQAAWRRQI…NPDLLLDLGS (92 aa).

Belongs to the EME1/MMS4 family. In terms of assembly, part of the heterodimeric MUS81-EME2 complex; the complex forms specifically during the DNA replication phase of the cell cycle.

Its subcellular location is the nucleus. Non-catalytic subunit of the structure-specific, heterodimeric DNA endonuclease MUS81-EME2 which is involved in the maintenance of genome stability. In the complex, EME2 is required for DNA cleavage, participating in DNA recognition and bending. MUS81-EME2 cleaves 3'-flaps and nicked Holliday junctions, and exhibit limited endonuclease activity with 5' flaps and nicked double-stranded DNAs. MUS81-EME2 which is active during the replication of DNA is more specifically involved in replication fork processing. Replication forks frequently encounter obstacles to their passage, including DNA base lesions, DNA interstrand cross-links, difficult-to-replicate sequences, transcription bubbles, or tightly bound proteins. One mechanism for the restart of a stalled replication fork involves nucleolytic cleavage mediated by the MUS81-EME2 endonuclease. By acting upon the stalled fork, MUS81-EME2 generates a DNA double-strand break (DSB) that can be repaired by homologous recombination, leading to the restoration of an active fork. MUS81-EME2 could also function in telomere maintenance. This chain is Structure-specific endonuclease subunit EME2, found in Homo sapiens (Human).